A 146-amino-acid chain; its full sequence is Protein translocase subunit SecE (146 aa).

Residues 1–81 (MSDERYAASD…KVKKPKKSAD (81 aa)) are disordered. Residues 10–20 (DGGGTEVGSGT) are compositionally biased toward gly residues. Positions 45-54 (RAANASNTGA) are enriched in polar residues. The span at 69–81 (KEGKVKKPKKSAD) shows a compositional bias: basic and acidic residues. A helical transmembrane segment spans residues 118–138 (VVLAFLAFMVALVGLADFGLA).

This sequence belongs to the SecE/SEC61-gamma family. As to quaternary structure, component of the Sec protein translocase complex. Heterotrimer consisting of SecY, SecE and SecG subunits. The heterotrimers can form oligomers, although 1 heterotrimer is thought to be able to translocate proteins. Interacts with the ribosome. Interacts with SecDF, and other proteins may be involved. Interacts with SecA.

It localises to the cell membrane. Essential subunit of the Sec protein translocation channel SecYEG. Clamps together the 2 halves of SecY. May contact the channel plug during translocation. This Mycobacterium leprae (strain TN) protein is Protein translocase subunit SecE.